Reading from the N-terminus, the 479-residue chain is Xylose isomerase (479 aa).

His-144 is a catalytic residue. 7 residues coordinate Mn(2+): Glu-275, Glu-311, His-314, Asp-339, Asp-350, Asp-352, and Tyr-382.

This sequence belongs to the xylose isomerase family. In terms of assembly, homodimer. It depends on Mn(2+) as a cofactor.

The catalysed reaction is alpha-D-xylose = alpha-D-xylulofuranose. In Hordeum vulgare (Barley), this protein is Xylose isomerase (XYLA).